A 133-amino-acid polypeptide reads, in one-letter code: Small ribosomal subunit protein uS8 (133 aa).

The protein belongs to the universal ribosomal protein uS8 family. In terms of assembly, part of the 30S ribosomal subunit. Contacts proteins S5 and S12.

Its function is as follows. One of the primary rRNA binding proteins, it binds directly to 16S rRNA central domain where it helps coordinate assembly of the platform of the 30S subunit. The chain is Small ribosomal subunit protein uS8 from Prochlorococcus marinus (strain MIT 9313).